The primary structure comprises 222 residues: Probable translocation protein y4yL (222 aa).

4 helical membrane-spanning segments follow: residues 6-26 (PAILALLAITAALGLLVLAVV), 52-72 (PNIVLYAAALILTMFVSAPVA), 158-178 (IGFLLYLPFIVIDLIVTTILM), and 182-202 (MSMVSPTIIAVPFKLFLFVAI).

This sequence belongs to the FliP/MopC/SpaP family.

It is found in the cell membrane. Its function is as follows. Could be involved in the secretion of an unknown factor. This chain is Probable translocation protein y4yL, found in Sinorhizobium fredii (strain NBRC 101917 / NGR234).